A 729-amino-acid chain; its full sequence is Elongation factor 2 (729 aa).

The tr-type G domain maps to 19–262; sequence EQIRNIAIAA…MVCEHFPNPI (244 aa). GTP is bound by residues 28–35, 94–98, and 148–151; these read AHVDHGKT, DTPGH, and NKVD. At H597 the chain carries Diphthamide.

The protein belongs to the TRAFAC class translation factor GTPase superfamily. Classic translation factor GTPase family. EF-G/EF-2 subfamily.

It localises to the cytoplasm. In terms of biological role, catalyzes the GTP-dependent ribosomal translocation step during translation elongation. During this step, the ribosome changes from the pre-translocational (PRE) to the post-translocational (POST) state as the newly formed A-site-bound peptidyl-tRNA and P-site-bound deacylated tRNA move to the P and E sites, respectively. Catalyzes the coordinated movement of the two tRNA molecules, the mRNA and conformational changes in the ribosome. The polypeptide is Elongation factor 2 (Halomicrobium mukohataei (strain ATCC 700874 / DSM 12286 / JCM 9738 / NCIMB 13541) (Haloarcula mukohataei)).